The chain runs to 489 residues: Glucose-6-phosphate isomerase (489 aa).

The Proton donor role is filled by Glu-309. Catalysis depends on residues His-340 and Lys-459.

This sequence belongs to the GPI family.

The protein resides in the cytoplasm. It catalyses the reaction alpha-D-glucose 6-phosphate = beta-D-fructose 6-phosphate. The protein operates within carbohydrate biosynthesis; gluconeogenesis. It participates in carbohydrate degradation; glycolysis; D-glyceraldehyde 3-phosphate and glycerone phosphate from D-glucose: step 2/4. Catalyzes the reversible isomerization of glucose-6-phosphate to fructose-6-phosphate. This is Glucose-6-phosphate isomerase from Idiomarina loihiensis (strain ATCC BAA-735 / DSM 15497 / L2-TR).